The sequence spans 496 residues: Probable malate:quinone oxidoreductase (496 aa).

Belongs to the MQO family. The cofactor is FAD.

The enzyme catalyses (S)-malate + a quinone = a quinol + oxaloacetate. The protein operates within carbohydrate metabolism; tricarboxylic acid cycle; oxaloacetate from (S)-malate (quinone route): step 1/1. This chain is Probable malate:quinone oxidoreductase, found in Prochlorococcus marinus (strain NATL1A).